Consider the following 375-residue polypeptide: CMP-N-acetylneuraminate-beta-1,4-galactoside alpha-2,3-sialyltransferase (375 aa).

The Cytoplasmic portion of the chain corresponds to methionine 1–arginine 8. A helical; Signal-anchor for type II membrane protein transmembrane segment spans residues asparagine 9–tryptophan 28. Residues lysine 29 to isoleucine 375 lie on the Lumenal side of the membrane. N-linked (GlcNAc...) asparagine glycans are attached at residues asparagine 80 and asparagine 171. An intrachain disulfide couples cysteine 160 to cysteine 314.

This sequence belongs to the glycosyltransferase 29 family. Post-translationally, the soluble form derives from the membrane form by proteolytic processing. As to expression, highly expressed in adult skeletal muscle and in all fetal tissues examined and to a much lesser extent in placenta, lung and liver.

It localises to the golgi apparatus. The protein localises to the golgi stack membrane. Its subcellular location is the secreted. The enzyme catalyses a beta-D-galactosyl-(1-&gt;4)-N-acetyl-beta-D-glucosaminyl derivative + CMP-N-acetyl-beta-neuraminate = an N-acetyl-alpha-neuraminyl-(2-&gt;3)-beta-D-galactosyl-(1-&gt;4)-N-acetyl-beta-D-glucosaminyl derivative + CMP + H(+). It participates in protein modification; protein glycosylation. Its function is as follows. Catalyzes the formation of the NeuAc-alpha-2,3-Gal-beta-1,4-GlcNAc-, NeuAc-alpha-2,3-Gal-beta-1,3-GlcNAc- and NeuAc-alpha-2,3-Gal-beta-1,3-GalNAc- sequences found in terminal carbohydrate groups of glycoproteins and glycolipids. The highest activity is toward Gal-beta-1,3-GlcNAc and the lowest toward Gal-beta-1,3-GalNAc. The polypeptide is CMP-N-acetylneuraminate-beta-1,4-galactoside alpha-2,3-sialyltransferase (ST3GAL3) (Homo sapiens (Human)).